Consider the following 630-residue polypeptide: Succinate dehydrogenase [ubiquinone] flavoprotein subunit, mitochondrial (630 aa).

The transit peptide at 1–31 (MWRGCVSRGLRSLSKGKGSSSSAPVSAAARL) directs the protein to the mitochondrion. FAD-binding positions include 52-57 (GAGGAG), 75-90 (TKLFPTRSHTVAAQGG), and Asp260. Tele-8alpha-FAD histidine is present on His83. Residues His281 and Thr293 each coordinate substrate. Arg325 acts as the Proton acceptor in catalysis. His392 contacts substrate. Glu426 is a binding site for FAD. Arg437 is a binding site for substrate. 442-443 (SL) serves as a coordination point for FAD.

Belongs to the FAD-dependent oxidoreductase 2 family. FRD/SDH subfamily. As to quaternary structure, component of complex II composed of eight subunits in plants: four classical SDH subunits SDH1, SDH2, SDH3 and SDH4 (a flavoprotein (FP), an iron-sulfur protein (IP), and a cytochrome b composed of a large and a small subunit.), as well as four subunits unknown in mitochondria from bacteria and heterotrophic eukaryotes. The cofactor is FAD.

The protein resides in the mitochondrion inner membrane. The enzyme catalyses a quinone + succinate = fumarate + a quinol. It functions in the pathway carbohydrate metabolism; tricarboxylic acid cycle; fumarate from succinate (eukaryal route): step 1/1. In terms of biological role, flavoprotein (FP) subunit of succinate dehydrogenase (SDH) that is involved in complex II of the mitochondrial electron transport chain and is responsible for transferring electrons from succinate to ubiquinone (coenzyme Q). In Oryza sativa subsp. japonica (Rice), this protein is Succinate dehydrogenase [ubiquinone] flavoprotein subunit, mitochondrial (SDH1).